Consider the following 46-residue polypeptide: Light-harvesting protein B800/850/890 alpha-1 chain (46 aa).

Residues 1–12 (MWRLWKLYDPRR) are Cytoplasmic-facing. Residues 13 to 33 (VLIGIFSWLAVLALVIHFILL) traverse the membrane as a helical segment. An a bacteriochlorophyll-binding site is contributed by His29. Residues 34-46 (STDRFNWVGGAAN) lie on the Periplasmic side of the membrane.

Belongs to the antenna complex alpha subunit family. The core complex is formed by different alpha and beta chains, binding bacteriochlorophyll molecules, and arranged most probably in tetrameric structures disposed around the reaction center. The non-pigmented gamma chains may constitute additional components.

The protein resides in the cell inner membrane. Antenna complexes are light-harvesting systems, which transfer the excitation energy to the reaction centers. This Halorhodospira halophila (strain DSM 244 / SL1) (Ectothiorhodospira halophila (strain DSM 244 / SL1)) protein is Light-harvesting protein B800/850/890 alpha-1 chain.